A 205-amino-acid chain; its full sequence is Small ribosomal subunit protein uS3 (205 aa).

The 69-residue stretch at 12–80 (VRQFLAKELA…PAQINIAEVR (69 aa)) folds into the KH type-2 domain.

The protein belongs to the universal ribosomal protein uS3 family. Part of the 30S ribosomal subunit. Forms a tight complex with proteins S10 and S14.

Its function is as follows. Binds the lower part of the 30S subunit head. Binds mRNA in the 70S ribosome, positioning it for translation. This is Small ribosomal subunit protein uS3 from Buchnera aphidicola subsp. Acyrthosiphon kondoi (Acyrthosiphon kondoi symbiotic bacterium).